Here is a 253-residue protein sequence, read N- to C-terminus: Transcription factor bHLH106 (253 aa).

Residues Ala66 to Leu115 form the bHLH domain.

As to quaternary structure, homodimer.

Its subcellular location is the nucleus. In Arabidopsis thaliana (Mouse-ear cress), this protein is Transcription factor bHLH106 (BHLH106).